We begin with the raw amino-acid sequence, 373 residues long: MKIFIIISLILTILIIQSKSKECPCSNVELCKPLEIGPRKEFIGFSVNSTFYPYYNWDHLTTIGIFYSEDIEDELLCMAKTNGVRLVYSAFYPVEQLSNETYIDQWINEKLELVQNTFTDGLNFDVEYPITDPIVAQQYTQLVAATNNAFKSVNLYYQISVDVAWDASNCIDYRCYDYLGLSKASDFLVVMDYDMKLDGYYFKTCLASANSPPSSVLSGMVNFTKLGIDESSLVMGLPWYGYNYPCIGSNYTLQTFECIIPPSSYLGYNCTDASGIEINYSIIMNMLNDTAIQNGGVQWDSESESPYFNFIDLFSGTQHQMWFDNPDSLTIKVNIARTMNLRGVGVWNIDQLWDDHSLSSGMWGALNSFFKIN.

Positions 1 to 20 (MKIFIIISLILTILIIQSKS) are cleaved as a signal peptide. The GH18 domain maps to 21-369 (KECPCSNVEL…SGMWGALNSF (349 aa)). Asparagine 48 is a glycosylation site (N-linked (GlcNAc...) asparagine). Residues 53-54 (PY) and 82-85 (NGVR) contribute to the chitin site. N-linked (GlcNAc...) asparagine glycosylation occurs at asparagine 99. Glutamate 127 serves as the catalytic Proton donor. Chitin-binding positions include tyrosine 128 and 191 to 194 (MDYD). N-linked (GlcNAc...) asparagine glycans are attached at residues asparagine 222, asparagine 250, asparagine 269, asparagine 279, and asparagine 288. Tryptophan 347 contributes to the chitin binding site.

Belongs to the glycosyl hydrolase 18 family.

Its subcellular location is the lysosome. Its function is as follows. Involved in the degradation of asparagine-linked glycoproteins. May hydrolyze of N-acetyl-beta-D-glucosamine (1-4)N-acetylglucosamine chitobiose core from the reducing end of the bond. The polypeptide is Probable di-N-acetylchitobiase 1 (ctbs1) (Dictyostelium discoideum (Social amoeba)).